We begin with the raw amino-acid sequence, 177 residues long: MVAIKNLVLVALTAVTALAMPSPLEERAATWTCMNEQKNPKTNKYENKRLLYNQNNAESNAHHAPLSDGKTGSSYPHWFTNGYDGDGKILKGRTPIKWGNSDCDRPPKHSKNGDGKNDHYLLEFPTFPDGHQYNFDSKKPKEDPGPARVIYTYPNKVFCGIVAHTRENQGDLKLCSH.

The N-terminal stretch at 1–27 is a signal peptide; that stretch reads MVAIKNLVLVALTAVTALAMPSPLEER. 2 cysteine pairs are disulfide-bonded: C33–C175 and C103–C159. The active site involves H77. Positions 98-117 are disordered; that stretch reads WGNSDCDRPPKHSKNGDGKN. Over residues 102-117 the composition is skewed to basic and acidic residues; the sequence is DCDRPPKHSKNGDGKN. E123 acts as the Proton acceptor in catalysis. The Proton donor role is filled by H164.

Belongs to the ribonuclease U2 family.

It is found in the secreted. Functionally, clavin has the same substrate specificity as alpha-sarcin. It is specific for purines in both single- and double-stranded RNA. Its toxic action on eukaryotic cells is the result of cleavage of a single phosphodiester bond in the 60S subunit of ribosomes. This chain is Ribonuclease clavin (cla), found in Aspergillus clavatus (strain ATCC 1007 / CBS 513.65 / DSM 816 / NCTC 3887 / NRRL 1 / QM 1276 / 107).